Consider the following 87-residue polypeptide: CRISPR-associated endoribonuclease Cas2 (87 aa).

Aspartate 8 provides a ligand contact to Mg(2+).

This sequence belongs to the CRISPR-associated endoribonuclease Cas2 protein family. Homodimer, forms a heterotetramer with a Cas1 homodimer. The cofactor is Mg(2+).

Functionally, CRISPR (clustered regularly interspaced short palindromic repeat), is an adaptive immune system that provides protection against mobile genetic elements (viruses, transposable elements and conjugative plasmids). CRISPR clusters contain sequences complementary to antecedent mobile elements and target invading nucleic acids. CRISPR clusters are transcribed and processed into CRISPR RNA (crRNA). Functions as a ssRNA-specific endoribonuclease. Involved in the integration of spacer DNA into the CRISPR cassette. The polypeptide is CRISPR-associated endoribonuclease Cas2 (Methanosarcina acetivorans (strain ATCC 35395 / DSM 2834 / JCM 12185 / C2A)).